The chain runs to 650 residues: Protein KINESIN LIGHT CHAIN-RELATED 3 (650 aa).

The tract at residues 104-141 (EKQTGKKNVTKSNVGVGGMRKKKVGGTKLQNGNEEPSS) is disordered. Polar residues predominate over residues 131–141 (KLQNGNEEPSS). 10 TPR repeats span residues 192-225 (IMCLHVTAAVHCKLKEYNEAIPVLQRSVEIPVVE), 235-268 (FAGLMQLGDTYAMVGQLESSISCYTEGLNIQKKV), 277-310 (GETCRYLAEALVQALRFDEAQQVCETALSIHRES), 319-353 (AADRRLMGLICETKGDHENALEHLVLASMAMAANG), 359-392 (AFVDTSIGDSYLSLSRFDEAICAYQKSLTALKTA), 401-434 (GSVYIRLADLYNRTGKVREAKSYCENALRIYESH), 444-477 (ASGLTDISVICESMNEVEQAITLLQKALKIYADS), 485-518 (AGIEAQMGVLYYMMGKYMESYNTFKSAISKLRAT), 527-560 (GIALNQMGLACIQLDAIEEAVELFEEAKCILEQE), and 569-602 (LGLYSNLAGAYDAIGRLDDAIKLLGHVVGVREEK).

The protein belongs to the kinesin light chain family.

The sequence is that of Protein KINESIN LIGHT CHAIN-RELATED 3 from Arabidopsis thaliana (Mouse-ear cress).